The sequence spans 208 residues: MAKYTGPSCRLCRREGGKLFLKGEKCFSDKCPVSIRAYAPGQHGQRRGRVSEYGGQLREKQKIRRIYGVLEGQFRRYFQRASQARGVTGELLLRFLELRLDNVAYRLGFGASRAEARQVVRHGHILVNGRRVDIPSYQVRAGDVVSVAEAARTHIRIAASVEATAGRGFPEWVSMDTTELKATIKAVPVREDMAPDLNEQVVVELYSK.

The S4 RNA-binding domain maps to 98–159 (LRLDNVAYRL…AARTHIRIAA (62 aa)).

This sequence belongs to the universal ribosomal protein uS4 family. In terms of assembly, part of the 30S ribosomal subunit. Contacts protein S5. The interaction surface between S4 and S5 is involved in control of translational fidelity.

Its function is as follows. One of the primary rRNA binding proteins, it binds directly to 16S rRNA where it nucleates assembly of the body of the 30S subunit. With S5 and S12 plays an important role in translational accuracy. This is Small ribosomal subunit protein uS4 from Acidithiobacillus ferrooxidans (strain ATCC 23270 / DSM 14882 / CIP 104768 / NCIMB 8455) (Ferrobacillus ferrooxidans (strain ATCC 23270)).